We begin with the raw amino-acid sequence, 94 residues long: RING finger protein Z (94 aa).

The span at 1-19 shows a compositional bias: polar residues; the sequence is MGNCNGASKSNQPDSSRVT. A disordered region spans residues 1–20; sequence MGNCNGASKSNQPDSSRVTQ. Glycine 2 carries the N-myristoyl glycine; by host lipid modification. The segment at 39-75 adopts an RING-type; atypical zinc-finger fold; that stretch reads CKCCWFADTNLITCNDHYLCLRCHQVMLRNSDLCNIC. The short motif at 89–92 is the PTAP/PSAP motif element; sequence PTAP.

The protein belongs to the arenaviridae Z protein family. As to quaternary structure, interacts with protein NP; this interaction probably directs the encapsidated genome to budding sites. Interacts (via RING domain) with polymerase L; this interaction inhibits viral transcription and replication, Z partially blocks the product exit tunnel for the releasing nascent RNA product. Interacts with the glycoprotein complex; this interaction plays a role in virion budding. Interacts with host eIF4E; this interaction results in eIF4E reduced affinity for its substrate, the 5'-m7 G cap structure. Interacts (via late-budding domain) with host TSG101; this interaction is essential for budding and release of viral particles. Interacts with host RPLP0; this interaction may serve to load ribosome-like particles inside the virion. Interacts with host PML; this interaction induces PML bodies redistribution in the cytoplasm upon viral infection. Post-translationally, myristoylation is required for the role of RING finger protein Z in assembly and budding.

The protein localises to the virion. It localises to the host cytoplasm. It is found in the host perinuclear region. The protein resides in the host cell membrane. Plays a crucial role in virion assembly and budding. Expressed late in the virus life cycle, it acts as an inhibitor of viral transcription and RNA synthesis by interacting with the viral polymerase L. Presumably recruits the NP encapsidated genome to cellular membranes at budding sites via direct interaction with NP. Plays critical roles in the final steps of viral release by interacting with host TSG101, a member of the vacuolar protein-sorting pathway and using other cellular host proteins involved in vesicle formation pathway. The budding of the virus progeny occurs after association of protein Z with the viral glycoprotein complex SSP-GP1-GP2 at the cell periphery, step that requires myristoylation of protein Z. Also selectively represses protein production by associating with host eIF4E. In cell-based minigenome assay, has an inhibitory effect on the ribonucleoprotein machinery (vRNP), which is responsible for the replication and transcription of the viral genome. This Akodon azarae (Azara's grass mouse) protein is RING finger protein Z.